Consider the following 269-residue polypeptide: Ubiquinone/menaquinone biosynthesis C-methyltransferase UbiE (269 aa).

Residues T92, D113, and N141–A142 each bind S-adenosyl-L-methionine.

The protein belongs to the class I-like SAM-binding methyltransferase superfamily. MenG/UbiE family.

The enzyme catalyses a 2-demethylmenaquinol + S-adenosyl-L-methionine = a menaquinol + S-adenosyl-L-homocysteine + H(+). It carries out the reaction a 2-methoxy-6-(all-trans-polyprenyl)benzene-1,4-diol + S-adenosyl-L-methionine = a 5-methoxy-2-methyl-3-(all-trans-polyprenyl)benzene-1,4-diol + S-adenosyl-L-homocysteine + H(+). It participates in quinol/quinone metabolism; menaquinone biosynthesis; menaquinol from 1,4-dihydroxy-2-naphthoate: step 2/2. Its pathway is cofactor biosynthesis; ubiquinone biosynthesis. In terms of biological role, methyltransferase required for the conversion of demethylmenaquinol (DMKH2) to menaquinol (MKH2) and the conversion of 2-polyprenyl-6-methoxy-1,4-benzoquinol (DDMQH2) to 2-polyprenyl-3-methyl-6-methoxy-1,4-benzoquinol (DMQH2). In Brucella melitensis biotype 2 (strain ATCC 23457), this protein is Ubiquinone/menaquinone biosynthesis C-methyltransferase UbiE.